We begin with the raw amino-acid sequence, 54 residues long: Ribulose bisphosphate carboxylase large chain (54 aa).

Positions 1–2 (MS) are excised as a propeptide. Proline 3 is modified (N-acetylproline). The residue at position 14 (lysine 14) is an N6,N6,N6-trimethyllysine.

The protein belongs to the RuBisCO large chain family. Type I subfamily. In terms of assembly, heterohexadecamer of 8 large chains and 8 small chains.

It localises to the plastid. The protein resides in the chloroplast. It catalyses the reaction 2 (2R)-3-phosphoglycerate + 2 H(+) = D-ribulose 1,5-bisphosphate + CO2 + H2O. The enzyme catalyses D-ribulose 1,5-bisphosphate + O2 = 2-phosphoglycolate + (2R)-3-phosphoglycerate + 2 H(+). RuBisCO catalyzes two reactions: the carboxylation of D-ribulose 1,5-bisphosphate, the primary event in carbon dioxide fixation, as well as the oxidative fragmentation of the pentose substrate in the photorespiration process. Both reactions occur simultaneously and in competition at the same active site. The chain is Ribulose bisphosphate carboxylase large chain (rbcL) from Ilex aquifolium (English holly).